The primary structure comprises 122 residues: Large ribosomal subunit protein uL14 (122 aa).

It belongs to the universal ribosomal protein uL14 family. As to quaternary structure, part of the 50S ribosomal subunit. Forms a cluster with proteins L3 and L19. In the 70S ribosome, L14 and L19 interact and together make contacts with the 16S rRNA in bridges B5 and B8.

In terms of biological role, binds to 23S rRNA. Forms part of two intersubunit bridges in the 70S ribosome. The sequence is that of Large ribosomal subunit protein uL14 from Alkaliphilus oremlandii (strain OhILAs) (Clostridium oremlandii (strain OhILAs)).